The following is a 101-amino-acid chain: Small ribosomal subunit protein uS14 (101 aa).

This sequence belongs to the universal ribosomal protein uS14 family. Part of the 30S ribosomal subunit. Contacts proteins S3 and S10.

In terms of biological role, binds 16S rRNA, required for the assembly of 30S particles and may also be responsible for determining the conformation of the 16S rRNA at the A site. In Albidiferax ferrireducens (strain ATCC BAA-621 / DSM 15236 / T118) (Rhodoferax ferrireducens), this protein is Small ribosomal subunit protein uS14.